Reading from the N-terminus, the 515-residue chain is FADH(2)-dependent monooxygenase TftD (515 aa).

Arg100–Ala104 contributes to the substrate binding site. FAD is bound by residues Leu151–Phe153, Gln157–Arg160, and Thr192. Residue Gly203 to Cys204 coordinates substrate. Thr457–Arg460 is a binding site for FAD.

The protein belongs to the FADH(2)-utilizing monooxygenase family. As to quaternary structure, homotetramer. The chlorophenol-4-monooxygenase is composed of an oxygenase component TftD and a reductase component TftC.

It functions in the pathway xenobiotic degradation. Functionally, oxygenase component of a two-component system that degrades 2,4,5-trichlorophenol. Uses FADH(2) supplied by TftC to oxidize 2,4,5-trichlorophenol (2,4,5-TCP) to 2,5-dichloro-p-benzoquinone, which is chemically reduced to 2,5-dichloro-p-hydroquinone (2,5-DiCHQ). Then, TftD oxidizes the latter to 5-chloro-2-hydroxy-p-benzoquinone. This is FADH(2)-dependent monooxygenase TftD (tftD) from Burkholderia cepacia (Pseudomonas cepacia).